We begin with the raw amino-acid sequence, 236 residues long: Phosphoribosylaminoimidazole-succinocarboxamide synthase (236 aa).

The protein belongs to the SAICAR synthetase family.

It carries out the reaction 5-amino-1-(5-phospho-D-ribosyl)imidazole-4-carboxylate + L-aspartate + ATP = (2S)-2-[5-amino-1-(5-phospho-beta-D-ribosyl)imidazole-4-carboxamido]succinate + ADP + phosphate + 2 H(+). The protein operates within purine metabolism; IMP biosynthesis via de novo pathway; 5-amino-1-(5-phospho-D-ribosyl)imidazole-4-carboxamide from 5-amino-1-(5-phospho-D-ribosyl)imidazole-4-carboxylate: step 1/2. This Rickettsia bellii (strain OSU 85-389) protein is Phosphoribosylaminoimidazole-succinocarboxamide synthase.